Here is a 778-residue protein sequence, read N- to C-terminus: Endonuclease MutS2 (778 aa).

328 to 335 (GPNTGGKT) is a binding site for ATP. The 76-residue stretch at 703–778 (LDLRGKRYEE…GSGCTIANLG (76 aa)) folds into the Smr domain.

The protein belongs to the DNA mismatch repair MutS family. MutS2 subfamily. As to quaternary structure, homodimer. Binds to stalled ribosomes, contacting rRNA.

Endonuclease that is involved in the suppression of homologous recombination and thus may have a key role in the control of bacterial genetic diversity. Its function is as follows. Acts as a ribosome collision sensor, splitting the ribosome into its 2 subunits. Detects stalled/collided 70S ribosomes which it binds and splits by an ATP-hydrolysis driven conformational change. Acts upstream of the ribosome quality control system (RQC), a ribosome-associated complex that mediates the extraction of incompletely synthesized nascent chains from stalled ribosomes and their subsequent degradation. Probably generates substrates for RQC. This Streptococcus equi subsp. equi (strain 4047) protein is Endonuclease MutS2.